The following is a 356-amino-acid chain: Putative methylthioribose-1-phosphate isomerase (356 aa).

Residues 57-59 (RGA), arginine 100, and glutamine 206 each bind substrate. Aspartate 247 acts as the Proton donor in catalysis. 257 to 258 (NK) contacts substrate.

The protein belongs to the eIF-2B alpha/beta/delta subunits family. MtnA subfamily.

The catalysed reaction is 5-(methylsulfanyl)-alpha-D-ribose 1-phosphate = 5-(methylsulfanyl)-D-ribulose 1-phosphate. Its function is as follows. Catalyzes the interconversion of methylthioribose-1-phosphate (MTR-1-P) into methylthioribulose-1-phosphate (MTRu-1-P). The chain is Putative methylthioribose-1-phosphate isomerase (aIF-2BI) from Pyrococcus abyssi (strain GE5 / Orsay).